Here is a 113-residue protein sequence, read N- to C-terminus: Small ribosomal subunit protein eS24 (113 aa).

This sequence belongs to the eukaryotic ribosomal protein eS24 family.

The polypeptide is Small ribosomal subunit protein eS24 (Metallosphaera sedula (strain ATCC 51363 / DSM 5348 / JCM 9185 / NBRC 15509 / TH2)).